A 66-amino-acid polypeptide reads, in one-letter code: MAKGKDVRVTIILECTSCVRNDIKKEAAGISRYITQKNRHNTPSRLELRKFCPYCYKHTIHGEIKK.

It belongs to the bacterial ribosomal protein bL33 family.

The protein localises to the plastid. Its subcellular location is the chloroplast. The sequence is that of Large ribosomal subunit protein bL33c (rpl33) from Arabidopsis thaliana (Mouse-ear cress).